The primary structure comprises 880 residues: Alanine--tRNA ligase (880 aa).

Positions 567, 571, 669, and 673 each coordinate Zn(2+).

This sequence belongs to the class-II aminoacyl-tRNA synthetase family. Zn(2+) is required as a cofactor.

Its subcellular location is the cytoplasm. It catalyses the reaction tRNA(Ala) + L-alanine + ATP = L-alanyl-tRNA(Ala) + AMP + diphosphate. Functionally, catalyzes the attachment of alanine to tRNA(Ala) in a two-step reaction: alanine is first activated by ATP to form Ala-AMP and then transferred to the acceptor end of tRNA(Ala). Also edits incorrectly charged Ser-tRNA(Ala) and Gly-tRNA(Ala) via its editing domain. The sequence is that of Alanine--tRNA ligase from Bacillus thuringiensis subsp. konkukian (strain 97-27).